The primary structure comprises 321 residues: Protein ATP1B4 (321 aa).

The interval 1 to 41 (MEPGMEMNTASEGGTRRGPENKHEEKVQDPNRGEAETKAEM) is disordered. Topologically, residues 1–72 (MEPGMEMNTA…RTCMGRTAKS (72 aa)) are cytoplasmic. The span at 14–41 (GTRRGPENKHEEKVQDPNRGEAETKAEM) shows a compositional bias: basic and acidic residues. A helical membrane pass occupies residues 73 to 93 (WGLILLFYFIFYTCLAGMFAF). Residues 94-321 (CMYVMLLTLS…RIIFTLSIGK (228 aa)) are Extracellular-facing. N-linked (GlcNAc...) asparagine glycosylation is found at Asn-132, Asn-176, and Asn-193. Residues Cys-165 and Cys-184 are joined by a disulfide bond. 2 cysteine pairs are disulfide-bonded: Cys-194–Cys-210 and Cys-233–Cys-293. Residues Asn-239, Asn-252, and Asn-270 are each glycosylated (N-linked (GlcNAc...) asparagine).

This sequence belongs to the X(+)/potassium ATPases subunit beta family. In terms of assembly, composed of two subunits: alpha (catalytic) and beta (accessory). Post-translationally, glycosylated. In terms of tissue distribution, expressed in skeletal muscle, intestine, heart, brain, retina, inner ear and skin.

It localises to the membrane. Its function is as follows. This is the non-catalytic component of the active enzyme, which catalyzes the hydrolysis of ATP coupled with the exchange of Na(+) and K(+) ions across the plasma membrane. This chain is Protein ATP1B4 (ATP1B4), found in Gallus gallus (Chicken).